The following is a 477-amino-acid chain: Bifunctional protein HldE (477 aa).

The tract at residues M1 to A318 is ribokinase. Residue N195–E198 participates in ATP binding. D264 is an active-site residue. The cytidylyltransferase stretch occupies residues F344–K477.

The protein in the N-terminal section; belongs to the carbohydrate kinase PfkB family. This sequence in the C-terminal section; belongs to the cytidylyltransferase family. As to quaternary structure, homodimer.

It catalyses the reaction D-glycero-beta-D-manno-heptose 7-phosphate + ATP = D-glycero-beta-D-manno-heptose 1,7-bisphosphate + ADP + H(+). It carries out the reaction D-glycero-beta-D-manno-heptose 1-phosphate + ATP + H(+) = ADP-D-glycero-beta-D-manno-heptose + diphosphate. The protein operates within nucleotide-sugar biosynthesis; ADP-L-glycero-beta-D-manno-heptose biosynthesis; ADP-L-glycero-beta-D-manno-heptose from D-glycero-beta-D-manno-heptose 7-phosphate: step 1/4. Its pathway is nucleotide-sugar biosynthesis; ADP-L-glycero-beta-D-manno-heptose biosynthesis; ADP-L-glycero-beta-D-manno-heptose from D-glycero-beta-D-manno-heptose 7-phosphate: step 3/4. Its function is as follows. Catalyzes the phosphorylation of D-glycero-D-manno-heptose 7-phosphate at the C-1 position to selectively form D-glycero-beta-D-manno-heptose-1,7-bisphosphate. In terms of biological role, catalyzes the ADP transfer from ATP to D-glycero-beta-D-manno-heptose 1-phosphate, yielding ADP-D-glycero-beta-D-manno-heptose. The chain is Bifunctional protein HldE from Hahella chejuensis (strain KCTC 2396).